Here is a 293-residue protein sequence, read N- to C-terminus: MAMEMRLPVARKPLSERLGRDTKKHLVVPGDTITTDTGFMRGHGTYMGEEKLIASVAGSVERVNKLICVKALKTRYIGEVGDIVVGRITEVQQKRWKVETNSRLDSVLLLSSMNLPGGELRRRSAEDELAMRGFLQEGDLISAEVQAVFSDGAVSLHTRSLKYGKLGQGVLVQVSPSLVKRQKTHFHDLPCGASVILGNNGFIWIYPTPEHKEEEAGGFIANLEPVSLADREVISRLRNCIISLVTQRMMLYDTSILYCYEASLPHQIKDILKPEIMEEIVMETRQRLLEQEG.

In terms of domain architecture, S1 motif spans 79–159 (EVGDIVVGRI…SDGAVSLHTR (81 aa)). S124 bears the Phosphoserine mark.

Belongs to the RRP4 family. In terms of assembly, component of the RNA exosome core complex (Exo-9), composed of EXOSC1, EXOSC2, EXOSC3, EXOSC4, EXOSC5, EXOSC6, EXOSC7, EXOSC8 and EXOSC9; within the complex interacts with EXOSC4 and EXOSC7. The catalytically inactive RNA exosome core complex (Exo-9) associates with the catalytic subunit EXOSC10/RRP6. Exo-9 may associate with DIS3 to form the nucleolar exosome complex, or DIS3L to form the cytoplasmic exosome complex. Exo-9 is formed by a hexameric base ring consisting of the heterodimers EXOSC4-EXOSC9, EXOSC5-EXOSC8 and EXOSC6-EXOSC7, and a cap ring consisting of EXOSC1, EXOSC2 and EXOSC3. The RNA exosome complex associates with cofactors C1D/RRP47, MPHOSPH6/MPP6 and MTREX/MTR4. Interacts with GTPBP1. Interacts with ZFP36L1 (via N-terminus).

It is found in the cytoplasm. Its subcellular location is the nucleus. The protein resides in the nucleolus. Non-catalytic component of the RNA exosome complex which has 3'-&gt;5' exoribonuclease activity and participates in a multitude of cellular RNA processing and degradation events. In the nucleus, the RNA exosome complex is involved in proper maturation of stable RNA species such as rRNA, snRNA and snoRNA, in the elimination of RNA processing by-products and non-coding 'pervasive' transcripts, such as antisense RNA species and promoter-upstream transcripts (PROMPTs), and of mRNAs with processing defects, thereby limiting or excluding their export to the cytoplasm. The RNA exosome may be involved in Ig class switch recombination (CSR) and/or Ig variable region somatic hypermutation (SHM) by targeting AICDA deamination activity to transcribed dsDNA substrates. In the cytoplasm, the RNA exosome complex is involved in general mRNA turnover and specifically degrades inherently unstable mRNAs containing AU-rich elements (AREs) within their 3' untranslated regions, and in RNA surveillance pathways, preventing translation of aberrant mRNAs. It seems to be involved in degradation of histone mRNA. The catalytic inactive RNA exosome core complex of 9 subunits (Exo-9) is proposed to play a pivotal role in the binding and presentation of RNA for ribonucleolysis, and to serve as a scaffold for the association with catalytic subunits and accessory proteins or complexes. EXOSC2 as peripheral part of the Exo-9 complex stabilizes the hexameric ring of RNase PH-domain subunits through contacts with EXOSC4 and EXOSC7. This Homo sapiens (Human) protein is Exosome complex component RRP4.